Consider the following 166-residue polypeptide: Small ribosomal subunit protein uS5 (166 aa).

The 64-residue stretch at 11 to 74 (LQEKLIAVNR…EQAKRNLSKV (64 aa)) folds into the S5 DRBM domain.

Belongs to the universal ribosomal protein uS5 family. Part of the 30S ribosomal subunit. Contacts proteins S4 and S8.

In terms of biological role, with S4 and S12 plays an important role in translational accuracy. Its function is as follows. Located at the back of the 30S subunit body where it stabilizes the conformation of the head with respect to the body. This Aeromonas salmonicida (strain A449) protein is Small ribosomal subunit protein uS5.